The primary structure comprises 191 residues: MSPRIGLTQKMIVDAAAEIADQEGVNGVSLAALSKKMNVRPPSLYNHINGLQAIRAELAVRGLTKLFDQMADSVTERKGDSAMLSLAHAYVDFAIENPGYYEAALLKVHDKRTEIVSDQIVCLVTKLLIENGYASEKTAIHATRGLRSLLHGFTVLIAKEAFEREEDILESLSFSIRTFLSGLLINNKNIM.

In terms of domain architecture, HTH tetR-type spans 6-66 (GLTQKMIVDA…ELAVRGLTKL (61 aa)). The H-T-H motif DNA-binding region spans 29–48 (SLAALSKKMNVRPPSLYNHI).

This is an uncharacterized protein from Bacillus subtilis (strain 168).